The following is a 296-amino-acid chain: Formamidopyrimidine-DNA glycosylase (296 aa).

Residue Pro-2 is the Schiff-base intermediate with DNA of the active site. The active-site Proton donor is Glu-3. Residue Lys-58 is the Proton donor; for beta-elimination activity of the active site. DNA contacts are provided by His-104, Arg-126, and Lys-169. Residues 260–296 (SVYDREGQACGTPGCGGTVARIVQAGRSTFYCAACQK) form an FPG-type zinc finger. Catalysis depends on Arg-286, which acts as the Proton donor; for delta-elimination activity.

Belongs to the FPG family. As to quaternary structure, monomer. It depends on Zn(2+) as a cofactor.

It carries out the reaction Hydrolysis of DNA containing ring-opened 7-methylguanine residues, releasing 2,6-diamino-4-hydroxy-5-(N-methyl)formamidopyrimidine.. It catalyses the reaction 2'-deoxyribonucleotide-(2'-deoxyribose 5'-phosphate)-2'-deoxyribonucleotide-DNA = a 3'-end 2'-deoxyribonucleotide-(2,3-dehydro-2,3-deoxyribose 5'-phosphate)-DNA + a 5'-end 5'-phospho-2'-deoxyribonucleoside-DNA + H(+). Functionally, involved in base excision repair of DNA damaged by oxidation or by mutagenic agents. Acts as a DNA glycosylase that recognizes and removes damaged bases. Has a preference for oxidized purines, such as 7,8-dihydro-8-oxoguanine (8-oxoG). Has AP (apurinic/apyrimidinic) lyase activity and introduces nicks in the DNA strand. Cleaves the DNA backbone by beta-delta elimination to generate a single-strand break at the site of the removed base with both 3'- and 5'-phosphates. The polypeptide is Formamidopyrimidine-DNA glycosylase (Rhizobium etli (strain ATCC 51251 / DSM 11541 / JCM 21823 / NBRC 15573 / CFN 42)).